The chain runs to 546 residues: Peroxisomal OPC-8:0-CoA ligase 1 (546 aa).

ATP is bound by residues serine 197, serine 198, glycine 199, threonine 200, threonine 201, and lysine 205. Residue lysine 265 coordinates CoA. The segment at 267–338 (EMHEMMSAIG…EKYPTVKILQ (72 aa)) is SBD1. 5 residues coordinate ATP: glutamine 338, glycine 339, threonine 343, aspartate 424, and arginine 439. The SBD2 stretch occupies residues 339–403 (GYGLTESTGI…LKGPSIMKGY (65 aa)). CoA is bound by residues lysine 447 and glycine 448. Residue lysine 530 participates in ATP binding. The Microbody targeting signal motif lies at 544–546 (SKL).

Belongs to the ATP-dependent AMP-binding enzyme family. Requires Mg(2+) as cofactor. In terms of tissue distribution, expressed at low levels in seedlings, cotyledons, leaves, hypocotyls and roots.

The protein localises to the peroxisome. The enzyme catalyses (9S,13S,15Z)-12-oxophyto-10,15-dienoate + ATP + CoA = (10Z,15Z)-12-oxophytodienoyl-CoA + AMP + diphosphate. It catalyses the reaction (1S,2S)-OPC-8 + ATP + CoA = OPC8-CoA + AMP + diphosphate. It carries out the reaction hexadecanoate + ATP + CoA = hexadecanoyl-CoA + AMP + diphosphate. The catalysed reaction is (9Z)-octadecenoate + ATP + CoA = (9Z)-octadecenoyl-CoA + AMP + diphosphate. The enzyme catalyses tetradecanoate + ATP + CoA = tetradecanoyl-CoA + AMP + diphosphate. It catalyses the reaction decanoate + ATP + CoA = decanoyl-CoA + AMP + diphosphate. It carries out the reaction dodecanoate + ATP + CoA = dodecanoyl-CoA + AMP + diphosphate. The catalysed reaction is octadecanoate + ATP + CoA = octadecanoyl-CoA + AMP + diphosphate. The enzyme catalyses OPC-6 + ATP + CoA = OPC-6-CoA + AMP + diphosphate. It catalyses the reaction dinor-OPDA + ATP + CoA = dinor-OPDA-CoA + AMP + diphosphate. Contributes to jasmonic acid biosynthesis by initiating the beta-oxidative chain shortening of its precursors. Converts 12-oxo-phytodienoic acid (OPDA) and 3-oxo-2-(2'-pentenyl)-cyclopentane-1-octanoic acid (OPC-8:0) into OPDA-CoA and OPC-8:0-CoA, respectively. Follows a two-step reaction mechanism, wherein the carboxylate substrate first undergoes adenylation by ATP, followed by a thioesterification in the presence of CoA to yield the final CoA thioester. The protein is Peroxisomal OPC-8:0-CoA ligase 1 of Arabidopsis thaliana (Mouse-ear cress).